The primary structure comprises 612 residues: MACPF domain-containing protein NSL1 (612 aa).

The 334-residue stretch at 5–338 (NFTRLDAHSA…PPIEELHQFL (334 aa)) folds into the MACPF domain.

Belongs to the complement C6/C7/C8/C9 (TC 1.C.39) family.

Functionally, negatively controls the salicylic acid (SA)-mediated pathway of programmed cell death in plant immunity. In Arabidopsis thaliana (Mouse-ear cress), this protein is MACPF domain-containing protein NSL1 (NSL1).